The chain runs to 715 residues: BBSome complex member BBS7 (715 aa).

Residue M1 is modified to N-acetylmethionine.

Part of BBSome complex, that contains BBS1, BBS2, BBS4, BBS5, BBS7, BBS8/TTC8, BBS9 and BBIP10. Interacts with BBS2 (via C-terminus). Interacts with CCDC28B. Interacts with SMO; the interaction is indicative for the association of SMO with the BBsome complex to facilitate ciliary localization of SMO.

It is found in the cell projection. Its subcellular location is the cilium membrane. The protein localises to the cytoplasm. It localises to the cytoskeleton. The protein resides in the microtubule organizing center. It is found in the centrosome. Its subcellular location is the centriolar satellite. The protein localises to the cilium basal body. Its function is as follows. The BBSome complex is thought to function as a coat complex required for sorting of specific membrane proteins to the primary cilia. The BBSome complex is required for ciliogenesis but is dispensable for centriolar satellite function. This ciliogenic function is mediated in part by the Rab8 GDP/GTP exchange factor, which localizes to the basal body and contacts the BBSome. Rab8(GTP) enters the primary cilium and promotes extension of the ciliary membrane. Firstly the BBSome associates with the ciliary membrane and binds to RAB3IP/Rabin8, the guanosyl exchange factor (GEF) for Rab8 and then the Rab8-GTP localizes to the cilium and promotes docking and fusion of carrier vesicles to the base of the ciliary membrane. The BBSome complex, together with the LTZL1, controls SMO ciliary trafficking and contributes to the sonic hedgehog (SHH) pathway regulation. Required for BBSome complex ciliary localization but not for the proper complex assembly. This chain is BBSome complex member BBS7 (Bbs7), found in Mus musculus (Mouse).